The primary structure comprises 241 residues: Pyridoxine/pyridoxamine 5'-phosphate oxidase (241 aa).

A disordered region spans residues 1-35; sequence MASNPPSAASPRRTAVSPGADRPDGPDPAGQRQSY. Substrate-binding positions include 32 to 35 and lysine 92; that span reads RQSY. Residues 87-92, 102-103, arginine 108, lysine 109, and glutamine 131 contribute to the FMN site; these read RTVLLK and YT. Residues tyrosine 149, arginine 153, and serine 157 each contribute to the substrate site. FMN contacts are provided by residues 166-167 and tryptophan 212; that span reads QS. 218–220 contributes to the substrate binding site; sequence RLH. Arginine 222 serves as a coordination point for FMN.

The protein belongs to the pyridoxamine 5'-phosphate oxidase family. In terms of assembly, homodimer. FMN serves as cofactor.

It catalyses the reaction pyridoxamine 5'-phosphate + O2 + H2O = pyridoxal 5'-phosphate + H2O2 + NH4(+). It carries out the reaction pyridoxine 5'-phosphate + O2 = pyridoxal 5'-phosphate + H2O2. The protein operates within cofactor metabolism; pyridoxal 5'-phosphate salvage; pyridoxal 5'-phosphate from pyridoxamine 5'-phosphate: step 1/1. Its pathway is cofactor metabolism; pyridoxal 5'-phosphate salvage; pyridoxal 5'-phosphate from pyridoxine 5'-phosphate: step 1/1. In terms of biological role, catalyzes the oxidation of either pyridoxine 5'-phosphate (PNP) or pyridoxamine 5'-phosphate (PMP) into pyridoxal 5'-phosphate (PLP). This is Pyridoxine/pyridoxamine 5'-phosphate oxidase from Frankia alni (strain DSM 45986 / CECT 9034 / ACN14a).